A 92-amino-acid polypeptide reads, in one-letter code: Small ribosomal subunit protein bS18 (92 aa).

This sequence belongs to the bacterial ribosomal protein bS18 family. In terms of assembly, part of the 30S ribosomal subunit. Forms a tight heterodimer with protein bS6.

In terms of biological role, binds as a heterodimer with protein bS6 to the central domain of the 16S rRNA, where it helps stabilize the platform of the 30S subunit. The sequence is that of Small ribosomal subunit protein bS18 from Ralstonia nicotianae (strain ATCC BAA-1114 / GMI1000) (Ralstonia solanacearum).